Reading from the N-terminus, the 233-residue chain is Large ribosomal subunit protein uL1 (233 aa).

This sequence belongs to the universal ribosomal protein uL1 family. Part of the 50S ribosomal subunit.

Functionally, binds directly to 23S rRNA. The L1 stalk is quite mobile in the ribosome, and is involved in E site tRNA release. Protein L1 is also a translational repressor protein, it controls the translation of the L11 operon by binding to its mRNA. This is Large ribosomal subunit protein uL1 from Shewanella sediminis (strain HAW-EB3).